A 206-amino-acid polypeptide reads, in one-letter code: Probable NAD(+) phosphorylase Rv3189 (206 aa).

It belongs to the MbcT/ParT/Res family. Forms a heterotetramer with cognate antitoxin Rv3188.

It catalyses the reaction phosphate + NAD(+) = ADP-alpha-D-ribose 1''-phosphate + nicotinamide + H(+). Functionally, probable toxic component of a type II toxin-antitoxin (TA) system. Degrades NAD(+) by phosphorolysis. Neutralized by its cognate antitoxin Rv3188. This Mycobacterium tuberculosis (strain ATCC 25618 / H37Rv) protein is Probable NAD(+) phosphorylase Rv3189.